The following is a 448-amino-acid chain: Protein chibby homolog 2 (448 aa).

Serine 41, serine 86, serine 89, serine 97, serine 124, serine 144, serine 148, and serine 150 each carry phosphoserine. A coiled-coil region spans residues 163–198; the sequence is AKEFVLQEENKSLREENKALREENRMLRKENKILQV. The tract at residues 206-226 is disordered; that stretch reads SLGREESRPPSPLPQKDSASL. 2 positions are modified to phosphoserine: serine 212 and serine 225. Residues 242–267 are a coiled coil; the sequence is KEDSTLQLLREENRALQQLLEQKQAY. Residues 270 to 321 are disordered; sequence QTEDAAAPAEESKPAPSPHEEPCSPGLLQDQGSGLSSHFEEPRGPPAPQEDS. Residues 279 to 291 are compositionally biased toward basic and acidic residues; sequence EESKPAPSPHEEP. Phosphoserine occurs at positions 335 and 338. Positions 356–414 form a coiled coil; that stretch reads LQLLREMRQALQALLKENRLLQEENRTLQVLRAEHRGFQEENKALWENNKLKLQQKLVI.

This sequence belongs to the chibby family. SPERT subfamily. Homodimer. Binds to NEK1.

The chain is Protein chibby homolog 2 (CBY2) from Macaca fascicularis (Crab-eating macaque).